We begin with the raw amino-acid sequence, 430 residues long: Asparagine--tRNA ligase (430 aa).

This sequence belongs to the class-II aminoacyl-tRNA synthetase family. In terms of assembly, homodimer.

The protein resides in the cytoplasm. It catalyses the reaction tRNA(Asn) + L-asparagine + ATP = L-asparaginyl-tRNA(Asn) + AMP + diphosphate + H(+). The chain is Asparagine--tRNA ligase from Staphylococcus aureus (strain bovine RF122 / ET3-1).